The chain runs to 311 residues: MKVLFWGTPDFAVKSLKALIESNHQVVGVITQPDKPRGRGQKIQPTPVKEEALKHNIPVFQPEKIKNNQEILETIKKLNPDISVVVAYGKILPEEIINIPKYKTINVHASLLPEYRGAAPIQRAIMEGKDKTGVCIMEIIKELDAGDVYACREVEITEDDDIISLHDKLAEEGARLLIKVLDKIEKGEIDKKPQDHEKATYAKPIEKSEGKIDFSRSAKEIFNQIRALKVWPKAYAKFRDEEVKILDAKIVECNLNALPGEIIKADEKEGIVVKTGDGCLLLKIIQFPNSKPITTQDAIRGYKIKAGERFE.

110-113 (SLLP) contacts (6S)-5,6,7,8-tetrahydrofolate.

It belongs to the Fmt family.

The enzyme catalyses L-methionyl-tRNA(fMet) + (6R)-10-formyltetrahydrofolate = N-formyl-L-methionyl-tRNA(fMet) + (6S)-5,6,7,8-tetrahydrofolate + H(+). Functionally, attaches a formyl group to the free amino group of methionyl-tRNA(fMet). The formyl group appears to play a dual role in the initiator identity of N-formylmethionyl-tRNA by promoting its recognition by IF2 and preventing the misappropriation of this tRNA by the elongation apparatus. This Sulfurihydrogenibium sp. (strain YO3AOP1) protein is Methionyl-tRNA formyltransferase.